We begin with the raw amino-acid sequence, 194 residues long: Crossover junction endodeoxyribonuclease RuvC (194 aa).

Catalysis depends on residues aspartate 7, glutamate 68, and aspartate 141. Positions 7, 68, and 141 each coordinate Mg(2+).

It belongs to the RuvC family. Homodimer which binds Holliday junction (HJ) DNA. The HJ becomes 2-fold symmetrical on binding to RuvC with unstacked arms; it has a different conformation from HJ DNA in complex with RuvA. In the full resolvosome a probable DNA-RuvA(4)-RuvB(12)-RuvC(2) complex forms which resolves the HJ. Mg(2+) is required as a cofactor.

Its subcellular location is the cytoplasm. The enzyme catalyses Endonucleolytic cleavage at a junction such as a reciprocal single-stranded crossover between two homologous DNA duplexes (Holliday junction).. Functionally, the RuvA-RuvB-RuvC complex processes Holliday junction (HJ) DNA during genetic recombination and DNA repair. Endonuclease that resolves HJ intermediates. Cleaves cruciform DNA by making single-stranded nicks across the HJ at symmetrical positions within the homologous arms, yielding a 5'-phosphate and a 3'-hydroxyl group; requires a central core of homology in the junction. The consensus cleavage sequence is 5'-(A/T)TT(C/G)-3'. Cleavage occurs on the 3'-side of the TT dinucleotide at the point of strand exchange. HJ branch migration catalyzed by RuvA-RuvB allows RuvC to scan DNA until it finds its consensus sequence, where it cleaves and resolves the cruciform DNA. The chain is Crossover junction endodeoxyribonuclease RuvC from Bifidobacterium longum (strain DJO10A).